We begin with the raw amino-acid sequence, 284 residues long: MLSKQIPLGIYEKALPAGECWLERLRLAKTLGFDFVEMSVDETDARLARLDWSREQRLALVSAVAETGVRVPSMCLSAHRRFPLGSEDDAVRAQGLEIMRKAIQFAQDVGIRVIQLAGYDVYYQQANDETRCRFRDGLKESVDMASRAQVTLAMEIMDYPLMNSISKALGYAHYLNNPWFQLYPDIGNLSAWDNDVQMELQAGIGHIVAVHVKDTKPGVFKNVPFGEGVVDFESCFATLKQSGYCGPYLIEMWSETAENPAAEVAKARDWVKARMASAGLVEAA.

Belongs to the L-ribulose-5-phosphate 3-epimerase family.

The catalysed reaction is L-ribulose 5-phosphate = L-xylulose 5-phosphate. It participates in cofactor degradation; L-ascorbate degradation; D-xylulose 5-phosphate from L-ascorbate: step 3/4. In terms of biological role, catalyzes the isomerization of L-xylulose-5-phosphate to L-ribulose-5-phosphate. Is involved in the anaerobic L-ascorbate utilization. The chain is L-ribulose-5-phosphate 3-epimerase UlaE from Salmonella choleraesuis (strain SC-B67).